We begin with the raw amino-acid sequence, 298 residues long: MSLYPSLEDLKVDKVIQAQTAFSANPANPAILSEASAPIPHDGNLYPRLYPELSQYMGLSLNEEEIRANVAVVSGAPLQGQLVARPSSINYMVAPVTGNDVGIRRAEIKQGIREVILCKDQDGKIGLRLKSIDNGIFVQLVQANSPASLVGLRFGDQVLQINGENCAGWSSDKAHKVLKQAFGEKITMTIRDRPFERTITMHKDSTGHVGFIFKNGKITSIVKDSSAARNGLLTEHNICEINGQNVIGLKDSQIADILSTSGTVVTITIMPAFIFEHIIKRMAPSIMKSLMDHTIPEV.

S2 is modified (N-acetylserine). An interaction with PDCD6IP region spans residues 2-60 (SLYPSLEDLKVDKVIQAQTAFSANPANPAILSEASAPIPHDGNLYPRLYPELSQYMGLS). Short sequence motifs (LYPX(n)L motif) lie at residues 3–7 (LYPSL), 45–49 (LYPRL), and 49–53 (LYPEL). S6 carries the phosphoserine modification. Y46 carries the phosphotyrosine modification. PDZ domains are found at residues 114–193 (EVIL…IRDR) and 198–273 (TITM…MPAF). A 1,2-diacyl-sn-glycero-3-phospho-(1D-myo-inositol-4,5-bisphosphate) is bound by residues N215 and 250 to 251 (KD).

Monomer and homodimer. Interacts with SDC1, SDC2, SDC3, SDC4, NRXN2, EPHA7, EPHB1, NF2 isoform 1, TGFA and IL5RA. Interacts with NFASC and PTPRJ. Interacts with SDCBP2. Interacts with PDCD6IP. Forms a complex with PDCD6IP and SDC2. Interacts (via C-terminus) with TGFBR1. Binds to FZD7; this interaction is increased by inositol trisphosphate (IP3). Interacts with SMO. In terms of processing, phosphorylated on tyrosine residues. In terms of tissue distribution, expressed in lung cancers, including adenocarcinoma, squamous cell carcinoma and small-cell carcinoma (at protein level). Widely expressed. Expressed in fetal kidney, liver, lung and brain. In adult highest expression in heart and placenta.

It localises to the cell junction. The protein resides in the focal adhesion. It is found in the adherens junction. Its subcellular location is the cell membrane. The protein localises to the endoplasmic reticulum membrane. It localises to the nucleus. The protein resides in the melanosome. It is found in the cytoplasm. Its subcellular location is the cytosol. The protein localises to the cytoskeleton. It localises to the secreted. The protein resides in the extracellular exosome. It is found in the membrane raft. Multifunctional adapter protein involved in diverse array of functions including trafficking of transmembrane proteins, neuro and immunomodulation, exosome biogenesis, and tumorigenesis. Positively regulates TGFB1-mediated SMAD2/3 activation and TGFB1-induced epithelial-to-mesenchymal transition (EMT) and cell migration in various cell types. May increase TGFB1 signaling by enhancing cell-surface expression of TGFR1 by preventing the interaction between TGFR1 and CAV1 and subsequent CAV1-dependent internalization and degradation of TGFR1. In concert with SDC1/4 and PDCD6IP, regulates exosome biogenesis. Regulates migration, growth, proliferation, and cell cycle progression in a variety of cancer types. In adherens junctions may function to couple syndecans to cytoskeletal proteins or signaling components. Seems to couple transcription factor SOX4 to the IL-5 receptor (IL5RA). May also play a role in vesicular trafficking. Seems to be required for the targeting of TGFA to the cell surface in the early secretory pathway. The polypeptide is Syntenin-1 (SDCBP) (Homo sapiens (Human)).